The chain runs to 113 residues: U11-theraphotoxin-Hhn1e (113 aa).

An N-terminal signal peptide occupies residues Met-1 to Ala-21. A propeptide spanning residues Asp-22–Arg-74 is cleaved from the precursor. Residues Leu-60–Asn-69 show a composition bias toward basic and acidic residues. A disordered region spans residues Leu-60–Pro-87. Intrachain disulfides connect Cys-75/Cys-90 and Cys-89/Cys-110.

Belongs to the neurotoxin 14 (magi-1) family. 01 (HNTX-16) subfamily. In terms of tissue distribution, expressed by the venom gland.

The protein localises to the secreted. Functionally, probable ion channel inhibitor. The protein is U11-theraphotoxin-Hhn1e of Cyriopagopus hainanus (Chinese bird spider).